The chain runs to 925 residues: Glutamate receptor 3.1 (925 aa).

Positions 1–25 (MLSSMNWVLLSFIIVLGGGLLLSEG) are cleaved as a signal peptide. Residues 26–591 (ASSSRPPVIK…NPWAFLRPFT (566 aa)) lie on the Extracellular side of the membrane. Residues Asn-309, Asn-341, Asn-359, Asn-419, Asn-437, and Asn-488 are each glycosylated (N-linked (GlcNAc...) asparagine). A helical membrane pass occupies residues 592 to 612 (LPMWAVTASFFVIVGAAIWIL). Residues 613-621 (EHRINDEFR) are Cytoplasmic-facing. Residues 622–642 (GPPRRQIITILWFTFSTMFFS) traverse the membrane as a helical segment. At 643 to 653 (HRETTVSTLGR) the chain is on the cytoplasmic side. The helical transmembrane segment at 654–674 (MVLLIWLFVVLIITSSYTASL) threads the bilayer. Topologically, residues 675–831 (TSILTVQQLN…GDSEQLNVHS (157 aa)) are extracellular. Asn-738 and Asn-812 each carry an N-linked (GlcNAc...) asparagine glycan. The chain crosses the membrane as a helical span at residues 832 to 852 (FWGMFLVVGIACLVALFIHFF). Topologically, residues 853–925 (KIIRDFCKDT…ISRTASRRPI (73 aa)) are cytoplasmic. A disordered region spans residues 897-925 (KRRLKRKRNNDHSMNANSIISRTASRRPI). Positions 908 to 919 (HSMNANSIISRT) are enriched in polar residues.

The protein belongs to the glutamate-gated ion channel (TC 1.A.10.1) family. As to quaternary structure, may form heteromers. As to expression, expressed predominantly in roots. Firt detected in the vascular tissues of the cotyledons, and later in the vasculature of all organs. In leaves, preferentially expressed in guard cells.

The protein localises to the membrane. Glutamate-gated receptor that probably acts as a non-selective cation channel. May be involved in light-signal transduction and calcium homeostasis via the regulation of calcium influx into cells. Required for the long-term calcium oscillation-regulated stomatal movements. This is Glutamate receptor 3.1 (GLR3.1) from Arabidopsis thaliana (Mouse-ear cress).